The chain runs to 617 residues: Translation initiation factor IF-2 (617 aa).

A compositionally biased stretch (basic residues) spans methionine 1 to lysine 11. The segment at methionine 1–glutamine 25 is disordered. Residues proline 119 to tyrosine 288 enclose the tr-type G domain. The G1 stretch occupies residues glycine 128–threonine 135. Residue glycine 128–threonine 135 coordinates GTP. The tract at residues glycine 153–lysine 157 is G2. The tract at residues aspartate 175 to glycine 178 is G3. Residues aspartate 175–histidine 179 and asparagine 229–aspartate 232 contribute to the GTP site. The interval asparagine 229–aspartate 232 is G4. Positions serine 265–leucine 267 are G5.

The protein belongs to the TRAFAC class translation factor GTPase superfamily. Classic translation factor GTPase family. IF-2 subfamily.

It localises to the cytoplasm. Functionally, one of the essential components for the initiation of protein synthesis. Protects formylmethionyl-tRNA from spontaneous hydrolysis and promotes its binding to the 30S ribosomal subunits. Also involved in the hydrolysis of GTP during the formation of the 70S ribosomal complex. This is Translation initiation factor IF-2 (infB) from Mycoplasma pneumoniae (strain ATCC 29342 / M129 / Subtype 1) (Mycoplasmoides pneumoniae).